The following is a 160-amino-acid chain: SsrA-binding protein (160 aa).

This sequence belongs to the SmpB family.

It is found in the cytoplasm. Functionally, required for rescue of stalled ribosomes mediated by trans-translation. Binds to transfer-messenger RNA (tmRNA), required for stable association of tmRNA with ribosomes. tmRNA and SmpB together mimic tRNA shape, replacing the anticodon stem-loop with SmpB. tmRNA is encoded by the ssrA gene; the 2 termini fold to resemble tRNA(Ala) and it encodes a 'tag peptide', a short internal open reading frame. During trans-translation Ala-aminoacylated tmRNA acts like a tRNA, entering the A-site of stalled ribosomes, displacing the stalled mRNA. The ribosome then switches to translate the ORF on the tmRNA; the nascent peptide is terminated with the 'tag peptide' encoded by the tmRNA and targeted for degradation. The ribosome is freed to recommence translation, which seems to be the essential function of trans-translation. This is SsrA-binding protein from Mycobacterium leprae (strain Br4923).